The primary structure comprises 144 residues: Superoxide dismutase [Mn], mitochondrial (144 aa).

Mn(2+) is bound by residues His-10, His-58, and Asp-143.

It belongs to the iron/manganese superoxide dismutase family. As to quaternary structure, homotetramer. Mn(2+) serves as cofactor.

It is found in the mitochondrion matrix. It catalyses the reaction 2 superoxide + 2 H(+) = H2O2 + O2. Its function is as follows. Destroys superoxide anion radicals which are normally produced within the cells and which are toxic to biological systems. In Petromyzon marinus (Sea lamprey), this protein is Superoxide dismutase [Mn], mitochondrial.